Reading from the N-terminus, the 65-residue chain is Kassorin-M (65 aa).

The first 22 residues, 1–22, serve as a signal peptide directing secretion; the sequence is MLTLKKSMLLLFFLGMVSFSLA. Positions 23 to 51 are excised as a propeptide; the sequence is DDKREDEAEEGEDKRADEGEEKRAAEKKR. A disordered region spans residues 24 to 45; the sequence is DKREDEAEEGEDKRADEGEEKR. Leucine 64 bears the Leucine amide mark.

This sequence belongs to the frog skin active peptide (FSAP) family. Brevinin subfamily. As to expression, expressed by the skin glands.

The protein resides in the secreted. Induces contraction of smooth muscle in isolated guinea pig urinary bladder (EC50=4.66 nM). Has no antimicrobial activity against the Gram-positive bacterium S.aureus, the Gram-negative bacterium E.coli and the yeast C.albicans. Elicits histamine release from rat peritoneal mast cells. This chain is Kassorin-M, found in Phlyctimantis maculatus (Red-legged running frog).